We begin with the raw amino-acid sequence, 189 residues long: Alanine and glycine-rich protein (189 aa).

Residues 127–160 (AGAGGGSGGGGGGGSGSGGSGGSGGSGGSGGNDG) are compositionally biased toward gly residues. The interval 127–170 (AGAGGGSGGGGGGGSGSGGSGGSGGSGGSGGNDGNDGNDGSSSR) is disordered.

As to expression, component of the organic matrix of calcified shell layers like nacre and prisms.

It is found in the secreted. This Mytilus californianus (California mussel) protein is Alanine and glycine-rich protein.